Reading from the N-terminus, the 507-residue chain is Probable aldehyde dehydrogenase (507 aa).

219–225 (GFGAEAG) is a binding site for NAD(+). Catalysis depends on residues glutamate 263 and cysteine 302.

This sequence belongs to the aldehyde dehydrogenase family.

It catalyses the reaction an aldehyde + NAD(+) + H2O = a carboxylate + NADH + 2 H(+). The protein is Probable aldehyde dehydrogenase of Mycobacterium bovis (strain ATCC BAA-935 / AF2122/97).